We begin with the raw amino-acid sequence, 162 residues long: UPF0178 protein RSKD131_2223 (162 aa).

It belongs to the UPF0178 family.

The protein is UPF0178 protein RSKD131_2223 of Cereibacter sphaeroides (strain KD131 / KCTC 12085) (Rhodobacter sphaeroides).